Here is a 355-residue protein sequence, read N- to C-terminus: Protein ATP1B4 (355 aa).

At 1 to 108 (MRRQLRSRRA…SLARTGQSWS (108 aa)) the chain is on the nuclear side. The segment at 33-77 (ADEEEEAEEEARVMVVPDLEEEEEEEEEKEEEEKEEEDSHSQETD) is disordered. A compositionally biased stretch (acidic residues) spans 50–68 (DLEEEEEEEEEKEEEEKEE). The chain crosses the membrane as a helical; Signal-anchor for type II membrane protein span at residues 109–129 (LILVIYFFFYASLAAVITLCM). Residues 130-355 (YTLFLTISPY…RVIFTLNIET (226 aa)) are Perinuclear space-facing.

This sequence belongs to the X(+)/potassium ATPases subunit beta family. Associates with a SMAD7-transcriptional complex. Interacts with SNW1 and TOR1AIP1. Does not associate with known Na,K-ATPase alpha-subunits.

The protein resides in the nucleus inner membrane. In terms of biological role, may act as a transcriptional coregulator during muscle development through its interaction with SNW1. Has lost its ancestral function as a Na,K-ATPase beta-subunit. The protein is Protein ATP1B4 (ATP1B4) of Bos taurus (Bovine).